A 300-amino-acid chain; its full sequence is Polyamine aminopropyltransferase (300 aa).

The PABS domain occupies 4–237; it reads WHWHIEWQTP…GLWGFVYASD (234 aa). An S-methyl-5'-thioadenosine-binding site is contributed by glutamine 33. The spermidine site is built by histidine 64 and glutamate 88. Residues aspartate 108 and 140–141 each bind S-methyl-5'-thioadenosine; that span reads DG. Catalysis depends on aspartate 158, which acts as the Proton acceptor. Proline 167 serves as a coordination point for S-methyl-5'-thioadenosine.

The protein belongs to the spermidine/spermine synthase family. In terms of assembly, homodimer or homotetramer.

Its subcellular location is the cytoplasm. The catalysed reaction is S-adenosyl 3-(methylsulfanyl)propylamine + putrescine = S-methyl-5'-thioadenosine + spermidine + H(+). Its pathway is amine and polyamine biosynthesis; spermidine biosynthesis; spermidine from putrescine: step 1/1. Catalyzes the irreversible transfer of a propylamine group from the amino donor S-adenosylmethioninamine (decarboxy-AdoMet) to putrescine (1,4-diaminobutane) to yield spermidine. The sequence is that of Polyamine aminopropyltransferase from Sulfurisphaera tokodaii (strain DSM 16993 / JCM 10545 / NBRC 100140 / 7) (Sulfolobus tokodaii).